The chain runs to 103 residues: Large ribosomal subunit protein bL21 (103 aa).

This sequence belongs to the bacterial ribosomal protein bL21 family. Part of the 50S ribosomal subunit. Contacts protein L20.

Its function is as follows. This protein binds to 23S rRNA in the presence of protein L20. This is Large ribosomal subunit protein bL21 from Pseudomonas syringae pv. syringae (strain B728a).